The following is a 246-amino-acid chain: UDP-N-acetyl-D-mannosaminuronic acid transferase (246 aa).

It belongs to the glycosyltransferase 26 family.

It carries out the reaction UDP-N-acetyl-alpha-D-mannosaminouronate + N-acetyl-alpha-D-glucosaminyl-di-trans,octa-cis-undecaprenyl diphosphate = beta-D-ManNAcA-(1-&gt;4)-alpha-D-GlcNAc-di-trans,octa-cis-undecaprenyl diphosphate + UDP + H(+). It participates in bacterial outer membrane biogenesis; enterobacterial common antigen biosynthesis. Functionally, catalyzes the synthesis of Und-PP-GlcNAc-ManNAcA (Lipid II), the second lipid-linked intermediate involved in enterobacterial common antigen (ECA) synthesis. The sequence is that of UDP-N-acetyl-D-mannosaminuronic acid transferase from Salmonella dublin (strain CT_02021853).